The following is a 509-amino-acid chain: Transmembrane protein 104 homolog (509 aa).

At 1 to 19 the chain is on the cytoplasmic side; the sequence is MPRLVNGREAAPTYSNLVG. Residues 20–40 traverse the membrane as a helical segment; sequence FIFIFNLIVGTGALTLPGVFA. At 41–45 the chain is on the extracellular side; the sequence is RAGWM. A helical transmembrane segment spans residues 46–66; that stretch reads LSLIVIVLLAIISYMTVTFII. Over 67-151 the chain is Cytoplasmic; that stretch reads EAMACANAIR…ATLFFNEFGR (85 aa). A helical transmembrane segment spans residues 152 to 172; it reads VMFYLCLIVYLYGDLSIYSAA. At 173 to 218 the chain is on the extracellular side; that stretch reads VARSLRDVVCDQTNGTDTNNLMYWPGDFENNTSLACWKEHTISRLN. 3 N-linked (GlcNAc...) asparagine glycosylation sites follow: Asn-186, Asn-202, and Asn-203. Residues 219–239 traverse the membrane as a helical segment; that stretch reads MYRVLLIGFTLIFGPFVYFNV. Over 240 to 248 the chain is Cytoplasmic; it reads QKTKYLQML. A helical membrane pass occupies residues 249–269; the sequence is TAAFRWMAFTLMICISLKLLI. Residues 270–277 are Extracellular-facing; the sequence is SRGAKGHP. The helical transmembrane segment at 278–298 threads the bilayer; that stretch reads ATFNVYGIPSLFGACVYSFMC. The Cytoplasmic segment spans residues 299–320; the sequence is HHSLPSLLAPIRHKSMVSKILS. Residues 321–341 traverse the membrane as a helical segment; that stretch reads IDYIIICAFYILLAMTGIFAF. The Extracellular portion of the chain corresponds to 342-361; the sequence is ERIEDLYTLDFLPYDVAYVD. Residues 362–382 traverse the membrane as a helical segment; that stretch reads FWSGLLICIDYFLALFPIFTL. Residues 383–411 lie on the Cytoplasmic side of the membrane; sequence STSFPIVAITLKNNLQSLFLDMSQYESYS. Residues 412–432 form a helical membrane-spanning segment; sequence VILRLCFPLLAIIPPFCITYF. Residues 433–439 lie on the Extracellular side of the membrane; the sequence is TESLSSL. Residues 440–460 form a helical membrane-spanning segment; the sequence is VAFTGTYAGTGIQYIIPVFLV. At 461–487 the chain is on the cytoplasmic side; it reads YFARRTCSELLGSGVVNRFKSPFKSSA. A helical transmembrane segment spans residues 488–508; it reads WLVFVFIWSILCVCLVSINLF. Position 509 (Ser-509) is a topological domain, extracellular.

Belongs to the TMEM104 family.

It localises to the membrane. This is Transmembrane protein 104 homolog from Drosophila melanogaster (Fruit fly).